We begin with the raw amino-acid sequence, 344 residues long: tRNA N6-adenosine threonylcarbamoyltransferase (344 aa).

2 residues coordinate Fe cation: His115 and His119. Residues 137–141, Asp170, Gly183, Asp187, and Asn276 contribute to the substrate site; that span reads LVSGG. Asp306 contacts Fe cation.

Belongs to the KAE1 / TsaD family. Fe(2+) serves as cofactor.

Its subcellular location is the cytoplasm. The catalysed reaction is L-threonylcarbamoyladenylate + adenosine(37) in tRNA = N(6)-L-threonylcarbamoyladenosine(37) in tRNA + AMP + H(+). Functionally, required for the formation of a threonylcarbamoyl group on adenosine at position 37 (t(6)A37) in tRNAs that read codons beginning with adenine. Is involved in the transfer of the threonylcarbamoyl moiety of threonylcarbamoyl-AMP (TC-AMP) to the N6 group of A37, together with TsaE and TsaB. TsaD likely plays a direct catalytic role in this reaction. The polypeptide is tRNA N6-adenosine threonylcarbamoyltransferase (Limosilactobacillus fermentum (strain NBRC 3956 / LMG 18251) (Lactobacillus fermentum)).